Here is a 199-residue protein sequence, read N- to C-terminus: NAD(P)H dehydrogenase (quinone) (199 aa).

The Flavodoxin-like domain occupies 4-190; sequence VLVLYYSAYG…GGARYQGKVI (187 aa). FMN-binding positions include 10-15 and 78-80; these read SAYGHI and TRF. Position 12 (tyrosine 12) interacts with NAD(+). Residue tryptophan 98 participates in substrate binding. FMN is bound by residues 113–119 and histidine 134; that span reads STASQHG.

This sequence belongs to the WrbA family. FMN is required as a cofactor.

It carries out the reaction a quinone + NADH + H(+) = a quinol + NAD(+). The catalysed reaction is a quinone + NADPH + H(+) = a quinol + NADP(+). This is NAD(P)H dehydrogenase (quinone) from Rhodopseudomonas palustris (strain BisB18).